The chain runs to 260 residues: Glutamate racemase (260 aa).

Substrate contacts are provided by residues 14-15 (DS) and 46-47 (YG). Cys-77 functions as the Proton donor/acceptor in the catalytic mechanism. 78-79 (NT) lines the substrate pocket. Catalysis depends on Cys-188, which acts as the Proton donor/acceptor. Position 189–190 (189–190 (TH)) interacts with substrate.

The protein belongs to the aspartate/glutamate racemases family.

It catalyses the reaction L-glutamate = D-glutamate. It participates in cell wall biogenesis; peptidoglycan biosynthesis. In terms of biological role, provides the (R)-glutamate required for cell wall biosynthesis. The chain is Glutamate racemase from Clostridium perfringens (strain 13 / Type A).